A 179-amino-acid chain; its full sequence is Large ribosomal subunit protein uL5 (179 aa).

Belongs to the universal ribosomal protein uL5 family. As to quaternary structure, part of the 50S ribosomal subunit; part of the 5S rRNA/L5/L18/L25 subcomplex. Contacts the 5S rRNA and the P site tRNA. Forms a bridge to the 30S subunit in the 70S ribosome.

Its function is as follows. This is one of the proteins that bind and probably mediate the attachment of the 5S RNA into the large ribosomal subunit, where it forms part of the central protuberance. In the 70S ribosome it contacts protein S13 of the 30S subunit (bridge B1b), connecting the 2 subunits; this bridge is implicated in subunit movement. Contacts the P site tRNA; the 5S rRNA and some of its associated proteins might help stabilize positioning of ribosome-bound tRNAs. This is Large ribosomal subunit protein uL5 from Shewanella loihica (strain ATCC BAA-1088 / PV-4).